The sequence spans 142 residues: Coiled-coil-helix-coiled-coil-helix domain-containing protein 10, mitochondrial (142 aa).

Residues 1–16 (MPRGSRSAASRPASRP) constitute a mitochondrion transit peptide. Residues 1 to 20 (MPRGSRSAASRPASRPAAPS) are compositionally biased toward low complexity. Disordered regions lie at residues 1-45 (MPRG…PGLM) and 68-97 (ALTGAFSGGSSEPSQPAVQQAPTPAAPQPL). Positions 21–39 (AHPPAHPPPSAAAPAPAPS) are enriched in pro residues. Low complexity predominate over residues 80 to 90 (PSQPAVQQAPT). Residues 99-140 (MGPCAYEIRQFLDCSTTQSDLSLCEGFSEALKQCKYYHGLSS) form the CHCH domain. Short sequence motifs (cx9C motif) lie at residues 102–112 (CAYEIRQFLDC) and 122–132 (CEGFSEALKQC). 2 disulfides stabilise this stretch: cysteine 102–cysteine 132 and cysteine 112–cysteine 122.

In terms of tissue distribution, ubiquitously expressed. Higher expression is observed in heart and liver.

Its subcellular location is the mitochondrion intermembrane space. Functionally, may be involved in the maintenance of mitochondrial organization and mitochondrial cristae structure. This chain is Coiled-coil-helix-coiled-coil-helix domain-containing protein 10, mitochondrial (CHCHD10), found in Homo sapiens (Human).